Here is a 186-residue protein sequence, read N- to C-terminus: RIO-type serine/threonine-protein kinase Rio1 (186 aa).

Residue K15 participates in ATP binding. D124 (proton acceptor) is an active-site residue. Mg(2+) is bound by residues N129 and D140. D140 acts as the 4-aspartylphosphate intermediate in catalysis.

The protein belongs to the protein kinase superfamily. RIO-type Ser/Thr kinase family.

The catalysed reaction is L-seryl-[protein] + ATP = O-phospho-L-seryl-[protein] + ADP + H(+). The enzyme catalyses L-threonyl-[protein] + ATP = O-phospho-L-threonyl-[protein] + ADP + H(+). It catalyses the reaction ATP + H2O = ADP + phosphate + H(+). Despite the protein kinase domain is proposed to act predominantly as an ATPase. This chain is RIO-type serine/threonine-protein kinase Rio1 (rio1), found in Thermoplasma acidophilum (strain ATCC 25905 / DSM 1728 / JCM 9062 / NBRC 15155 / AMRC-C165).